A 384-amino-acid polypeptide reads, in one-letter code: Probable protein phosphatase 2C 48 (384 aa).

Residues 47 to 358 (ITGEFSMAVV…DDITVIVVFL (312 aa)) enclose the PPM-type phosphatase domain. Phosphoserine is present on serine 78. Aspartate 89, glycine 90, aspartate 290, and aspartate 349 together coordinate Mn(2+).

The protein belongs to the PP2C family. Mg(2+) serves as cofactor. Requires Mn(2+) as cofactor.

The catalysed reaction is O-phospho-L-seryl-[protein] + H2O = L-seryl-[protein] + phosphate. It carries out the reaction O-phospho-L-threonyl-[protein] + H2O = L-threonyl-[protein] + phosphate. Functionally, may dephosphorylate and repress plasma membrane H(+)-ATPases (PM H(+)-ATPases, e.g. AHA1 and AHA2), thus influencing negatively plant growth and fitness. In Arabidopsis thaliana (Mouse-ear cress), this protein is Probable protein phosphatase 2C 48.